The chain runs to 554 residues: (E)-beta-caryophyllene synthase (554 aa).

Positions 313 and 317 each coordinate Mn(2+). The short motif at 313–317 (DDIYD) is the DDXXD motif element. Homodimerization stretches follow at residues 319–325 (YGTLDEL) and 391–427 (EAQW…LAVI). Mn(2+)-binding residues include D457 and E465.

The protein belongs to the terpene synthase family. Homodimer. Mn(2+) is required as a cofactor. The cofactor is Mg(2+). In terms of tissue distribution, expressed in peltate glandular trichomes. Present at low levels in flowers, leaves and stems.

It catalyses the reaction (2E,6E)-farnesyl diphosphate = (-)-(E)-beta-caryophyllene + diphosphate. The enzyme catalyses (2E,6E)-farnesyl diphosphate = alpha-humulene + diphosphate. The protein operates within secondary metabolite biosynthesis; terpenoid biosynthesis. Involved in the biosynthesis of phenolic sesquiterpenes natural products. Sesquiterpene synthase converting (2E,6E)-farnesyl diphosphate (FPP) to (E)-beta-caryophyllene and alpha-humulene. The protein is (E)-beta-caryophyllene synthase of Origanum vulgare (Wild marjoram).